The sequence spans 311 residues: Methionyl-tRNA formyltransferase (311 aa).

(6S)-5,6,7,8-tetrahydrofolate is bound at residue 112 to 115; it reads SLLP.

It belongs to the Fmt family.

The catalysed reaction is L-methionyl-tRNA(fMet) + (6R)-10-formyltetrahydrofolate = N-formyl-L-methionyl-tRNA(fMet) + (6S)-5,6,7,8-tetrahydrofolate + H(+). Its function is as follows. Attaches a formyl group to the free amino group of methionyl-tRNA(fMet). The formyl group appears to play a dual role in the initiator identity of N-formylmethionyl-tRNA by promoting its recognition by IF2 and preventing the misappropriation of this tRNA by the elongation apparatus. This Agrobacterium fabrum (strain C58 / ATCC 33970) (Agrobacterium tumefaciens (strain C58)) protein is Methionyl-tRNA formyltransferase.